The primary structure comprises 149 residues: Inner membrane protein YfeZ (149 aa).

Over 1 to 18 the chain is Cytoplasmic; the sequence is MKSTEFHPVHYDAHGRLR. Residues 19–39 form a helical membrane-spanning segment; it reads LPLLFWLVLLLQARTWVLFVI. The Periplasmic segment spans residues 40 to 58; the sequence is AGASREQGTALLNLFYPDH. Residues 59–79 form a helical membrane-spanning segment; it reads DNFWLGLIPGIPAVLAFLLSG. Topologically, residues 80–89 are cytoplasmic; it reads RRATFPRTWR. Residues 90–110 traverse the membrane as a helical segment; the sequence is VLYFLLLLAQVVLLCWQPWLW. The Periplasmic portion of the chain corresponds to 111–115; the sequence is LNGES. The chain crosses the membrane as a helical span at residues 116–136; sequence VSGIGLALVVADIVALIWLLT. The Cytoplasmic portion of the chain corresponds to 137-149; that stretch reads NRRLRACFYEVKE.

The protein localises to the cell inner membrane. In Escherichia coli (strain K12), this protein is Inner membrane protein YfeZ (yfeZ).